Reading from the N-terminus, the 407-residue chain is MEPLDNTSLEESQFRPEKKEKSTCSICREDGDGYHFGAEACRACAAFFRRSVSLDKTYLCRGNNDCEITANIRCMCRSCRFAKCLEVGMNPAGVQQRRDTIGKREIKPDSTDLMQLLGSVGDGYPPTTSAQSALVEDLHPSFNDRMPILMKMRVNYRKMDNARLVIHRKDGQSLFKEKTPKAVNYKEACAQSIREVSLVADWVAWCFDDFVTLPMDQKKVLFRNFYTPFSVLEGAFLCHINDTSNALILPSGDYIDTNNLKSFFNIPDEEQPMTDDEIEKFCRMFKPSFELNRRGLVLPMMAEKIDVFEFFALCTFVFWDFGLDEQTDDCMMIGKSVKDRVMKELAFYLRCAKRLEEPSLRVASLLTLLPALQRCVRRFQEDIEITNVFNVYAPPKDFYDLVNGKFC.

Positions 21–96 (KSTCSICRED…VGMNPAGVQQ (76 aa)) form a DNA-binding region, nuclear receptor. 2 NR C4-type zinc fingers span residues 24 to 44 (CSIC…CRAC) and 60 to 79 (CRGN…CRSC). Residues 130 to 405 (AQSALVEDLH…KDFYDLVNGK (276 aa)) enclose the NR LBD domain. The interval 394-405 (PPKDFYDLVNGK) is AF-2.

It belongs to the nuclear hormone receptor family. In terms of tissue distribution, expressed in intestinal epithelial cells, excretory gland cells and in several head neurons.

It localises to the nucleus. Functionally, nuclear receptor which acts as a transcription activator. Binds small molecule ligands, such as phenazine 1-carboxamide (PCN), a pathogen-derived metabolite, leading to modulation of innate immune responses against virulent pathogens. On exposure to exogenous PCN, P.aeruginosa and other xenobiotic immunostimulant such as R24, activates immune response genes, including irg-4, irg-5, mul-1, drd-50, cyp-35C1 and ugt-30, probably via direct interaction with their promoters, and independent of the p38 MAPK pmk-1 pathway. Exhibits higher affinity to R24 than PCN and thus induces stronger immune response. Binds its own promoter thereby autoregulating its expression in the head hypodermis and the pharynx. Possibly plays a role in lipid storage or catabolism. The sequence is that of Nuclear hormone receptor family member nhr-86 (nhr-86) from Caenorhabditis elegans.